We begin with the raw amino-acid sequence, 125 residues long: Small ribosomal subunit protein uS11 (125 aa).

Residues K101–K125 are disordered. Residues P116–K125 are compositionally biased toward basic residues.

The protein belongs to the universal ribosomal protein uS11 family. Part of the 30S ribosomal subunit. Interacts with proteins S7 and S18. Binds to IF-3.

In terms of biological role, located on the platform of the 30S subunit, it bridges several disparate RNA helices of the 16S rRNA. Forms part of the Shine-Dalgarno cleft in the 70S ribosome. This Mycoplasma sp protein is Small ribosomal subunit protein uS11.